The chain runs to 376 residues: MFQLSVQDIHPGEQAGNKEEAIRQIAAALAQAGNVAGGYVDGMLAREQQTSTFLGNGIAIPHGTTDTRDQVLKTGVQVFQFPQGVTWGEGQVAYVAIGIAASSDEHLGLLRQLTHVLSDDSVAEQLKSATTAEELRALLMGEKQSEQLKLDNETMTLDVIASSLVTLQALNAARLKEAGAVDAAFVAKTINDSPMNLGQGIWLNDSAEGNLRSAVAVSRATQAFDVEGEKAALLVTVAMNDEQPIAVLKRLGDLLLNNKADRLLSADAATLLALLTSDDALTDDVLSAEFVVRNEHGLHARPGTMLVNTIKQFNSEITVTNLDGTGKPANGRSLMKVVALGVKKGHRLRFTAQGEDAEQALKAIGDAIAAGLGEGA.

In terms of domain architecture, PTS EIIA type-2 spans Phe-2–Glu-142. Residue His-62 is the Tele-phosphohistidine intermediate; for EIIA activity of the active site. His-62 carries the phosphohistidine; by HPr modification. Positions Thr-156–Asp-284 are m domain. Positions Val-285–Gly-375 constitute an HPr domain. Catalysis depends on His-299, which acts as the Pros-phosphohistidine intermediate; for HPr activity. His-299 is subject to Phosphohistidine; by EI.

The protein localises to the cytoplasm. In terms of biological role, the phosphoenolpyruvate-dependent sugar phosphotransferase system (sugar PTS), a major carbohydrate active transport system, catalyzes the phosphorylation of incoming sugar substrates concomitantly with their translocation across the cell membrane. The enzyme II FruAB PTS system is involved in fructose transport. This chain is Multiphosphoryl transfer protein (fruB), found in Salmonella typhimurium (strain LT2 / SGSC1412 / ATCC 700720).